We begin with the raw amino-acid sequence, 148 residues long: Ribonuclease pancreatic (148 aa).

Residues 1–25 (MGLEKSLILLPLLVLVFGWVQSSLG) form the signal peptide. 2 residues coordinate substrate: K32 and R35. H36 acts as the Proton acceptor in catalysis. Cystine bridges form between C50–C108, C64–C119, C82–C134, and C89–C96. N-linked (GlcNAc...) asparagine glycosylation is present at N58. 65–69 (KPVNT) is a binding site for substrate. Residue N86 is glycosylated (N-linked (GlcNAc...) asparagine). The substrate site is built by K90 and R109. H143 (proton donor) is an active-site residue.

Belongs to the pancreatic ribonuclease family. Monomer. Interacts with and forms tight 1:1 complexes with RNH1. Dimerization of two such complexes may occur. Interaction with RNH1 inhibits this protein. Pancreas.

The protein resides in the secreted. It catalyses the reaction an [RNA] containing cytidine + H2O = an [RNA]-3'-cytidine-3'-phosphate + a 5'-hydroxy-ribonucleotide-3'-[RNA].. The enzyme catalyses an [RNA] containing uridine + H2O = an [RNA]-3'-uridine-3'-phosphate + a 5'-hydroxy-ribonucleotide-3'-[RNA].. Functionally, endonuclease that catalyzes the cleavage of RNA on the 3' side of pyrimidine nucleotides. Acts on single-stranded and double-stranded RNA. This Chionomys nivalis (European snow vole) protein is Ribonuclease pancreatic (RNASE1).